The following is a 106-amino-acid chain: CELTNITIAVEREECELCITVNATWCSGYCFTRDPVYKYPPVSEVQQTCTFKEVVYETVKIPGCRDHAESLYSYPVATECHCETCDTDSTDCTVRGLGPSYCSFNQ.

Cystine bridges form between Cys1–Cys49, Cys15–Cys64, Cys18–Cys102, Cys26–Cys80, Cys30–Cys82, and Cys85–Cys92. Asn5 and Asn22 each carry an N-linked (GlcNAc...) asparagine glycan.

This sequence belongs to the glycoprotein hormones subunit beta family. As to quaternary structure, heterodimer. The active follitropin is a heterodimer composed of an alpha chain/CGA shared with other hormones and a unique beta chain/FSHB shown here.

The protein localises to the secreted. Together with the alpha chain CGA constitutes follitropin, the follicle-stimulating hormone, and provides its biological specificity to the hormone heterodimer. Binds FSHR, a G protein-coupled receptor, on target cells to activate downstream signaling pathways. Follitropin is involved in follicle development and spermatogenesis in reproductive organs. The polypeptide is Follitropin subunit beta (FSHB) (Struthio camelus (Common ostrich)).